The sequence spans 397 residues: Heterogeneous nuclear ribonucleoprotein K homolog (397 aa).

The tract at residues 1–41 is disordered; sequence MMIKVGAAINGTDSPKAMKREHDNDDGDRTGRHKRPKTDGF. Basic and acidic residues predominate over residues 16–30; it reads KAMKREHDNDDGDRT. KH domains lie at 49-111 and 124-189; these read KFEV…LKDV and PCEV…IEEV. The interval 220–279 is disordered; the sequence is GGFPGNMPAGGPPNNRGPAPQRGGQGPPGGPRSYGGAITQGGGQRSFEAGDFQQFRGGPG. Residues 224-241 show a composition bias toward low complexity; it reads GNMPAGGPPNNRGPAPQR. The 64-residue stretch at 316–379 folds into the KH 3 domain; that stretch reads VTTAQVTIPS…QQIHSAQYLL (64 aa).

In terms of assembly, interacts with alg-1; the interaction is direct and may be strengthened through RNA-protein association. As to expression, expressed in gut, muscle, neuronal and hypodermal tissues. Highly expressed in the germline and oocytes.

The protein resides in the nucleus. It localises to the cytoplasm. Its function is as follows. RNA-binding protein which functions together with alg-1, a component of the miRNA loading complex, to modulate the processing and activity of specific miRNAs such as miR-58 and let-7 to regulate gene expression at the post-transcriptional level during embryonic, hypodermal and neuronal development. Promotes the lsy-6-mediated repression of cog-1 in uterine cells. In embryos, may play a role in the DNA damage response. This chain is Heterogeneous nuclear ribonucleoprotein K homolog, found in Caenorhabditis elegans.